We begin with the raw amino-acid sequence, 173 residues long: MQAPSLTVTAPASPSPDERKQEYRDAMARLGAAVNIVTTDGPGGLAGFAATAVCSVTDSPPTLLVCLNRTSSAYPAVNANRVLCVNTLERGHEDLSRLFGGKTPVHERFEGASWSSLETGAPVLDDALISLDCRVKAISDGGTHDILICDVVAIRENDGGQALIYFDRRYHAI.

Belongs to the non-flavoprotein flavin reductase family. RutF subfamily.

The enzyme catalyses FMNH2 + NAD(+) = FMN + NADH + 2 H(+). Its function is as follows. Catalyzes the reduction of FMN to FMNH2 which is used to reduce pyrimidine by RutA via the Rut pathway. This is FMN reductase (NADH) RutF 2 from Rhizobium rhizogenes (strain K84 / ATCC BAA-868) (Agrobacterium radiobacter).